A 308-amino-acid chain; its full sequence is MIDRFGRPLEDLRITLTHVCNFECFFCHMEGEEGDNYILSKEDILLVAKVAKNFDINSVKLTGGEPTLRRDLVEIVRGLKQLGYRDVSMTTNGLLLKDLAYKLKLAGLDRINVSLHAISRETFKKITGVDAFDRVIEGIKSAIDVGLVPVKLNFVVNRRNREEVFKFIELSQNLGVNEIHLIELHPVGLGKLAFKEHDDLREIEEYIEKISIKKQIRKKHFRPRYVLPSGLIVEVIKPYANPIFCAGCNRIRLSVDGKLKTCLYREDNVIDILDILKGEYSEDVKEELLGRAFMIAIAIREPNFKYKI.

Positions 4–224 (RFGRPLEDLR…QIRKKHFRPR (221 aa)) constitute a Radical SAM core domain. R13 provides a ligand contact to GTP. Positions 20, 24, and 27 each coordinate [4Fe-4S] cluster. Residue K60 coordinates GTP. S-adenosyl-L-methionine is bound at residue G64. A GTP-binding site is contributed by T90. Position 114 (S114) interacts with S-adenosyl-L-methionine. Position 151 (K151) interacts with GTP. C245 and C248 together coordinate [4Fe-4S] cluster. 250–252 (RIR) lines the GTP pocket. A [4Fe-4S] cluster-binding site is contributed by C262.

The protein belongs to the radical SAM superfamily. MoaA family. It depends on [4Fe-4S] cluster as a cofactor.

The enzyme catalyses GTP + AH2 + S-adenosyl-L-methionine = (8S)-3',8-cyclo-7,8-dihydroguanosine 5'-triphosphate + 5'-deoxyadenosine + L-methionine + A + H(+). Its pathway is cofactor biosynthesis; molybdopterin biosynthesis. Catalyzes the cyclization of GTP to (8S)-3',8-cyclo-7,8-dihydroguanosine 5'-triphosphate. The sequence is that of Probable GTP 3',8-cyclase from Saccharolobus islandicus (strain Y.N.15.51 / Yellowstone #2) (Sulfolobus islandicus).